We begin with the raw amino-acid sequence, 233 residues long: 2,3,4,5-tetrahydropyridine-2,6-dicarboxylate N-acetyltransferase (233 aa).

This sequence belongs to the transferase hexapeptide repeat family. DapH subfamily.

It carries out the reaction (S)-2,3,4,5-tetrahydrodipicolinate + acetyl-CoA + H2O = L-2-acetamido-6-oxoheptanedioate + CoA. Its pathway is amino-acid biosynthesis; L-lysine biosynthesis via DAP pathway; LL-2,6-diaminopimelate from (S)-tetrahydrodipicolinate (acetylase route): step 1/3. Catalyzes the transfer of an acetyl group from acetyl-CoA to tetrahydrodipicolinate. This chain is 2,3,4,5-tetrahydropyridine-2,6-dicarboxylate N-acetyltransferase, found in Enterococcus faecalis (strain ATCC 700802 / V583).